The chain runs to 322 residues: o-succinylbenzoate synthase (322 aa).

Catalysis depends on lysine 136, which acts as the Proton donor. Residues aspartate 165, glutamate 194, and aspartate 219 each contribute to the Mg(2+) site. Lysine 243 acts as the Proton acceptor in catalysis.

This sequence belongs to the mandelate racemase/muconate lactonizing enzyme family. MenC type 1 subfamily. Monomer. A divalent metal cation serves as cofactor.

The enzyme catalyses (1R,6R)-6-hydroxy-2-succinyl-cyclohexa-2,4-diene-1-carboxylate = 2-succinylbenzoate + H2O. Its pathway is quinol/quinone metabolism; 1,4-dihydroxy-2-naphthoate biosynthesis; 1,4-dihydroxy-2-naphthoate from chorismate: step 4/7. The protein operates within cofactor biosynthesis; phylloquinone biosynthesis. Its function is as follows. Converts 2-succinyl-6-hydroxy-2,4-cyclohexadiene-1-carboxylate (SHCHC) to 2-succinylbenzoate (OSB). Does not show N-succinylamino acid racemase (NSAR) activity with N-succinyl-L-phenylglycine as substrate. The polypeptide is o-succinylbenzoate synthase (Thermosynechococcus vestitus (strain NIES-2133 / IAM M-273 / BP-1)).